Here is a 175-residue protein sequence, read N- to C-terminus: NADH-ubiquinone oxidoreductase chain 6 (175 aa).

Helical transmembrane passes span 1-21 (MMAY…VGFS), 25-45 (SPIY…GIVM), 47-67 (FGGS…MLVV), 87-107 (AAVL…VLYV), 116-136 (VFNF…FGVF), and 149-169 (YGVW…LVIL).

Belongs to the complex I subunit 6 family. Core subunit of respiratory chain NADH dehydrogenase (Complex I) which is composed of 45 different subunits.

The protein localises to the mitochondrion inner membrane. It catalyses the reaction a ubiquinone + NADH + 5 H(+)(in) = a ubiquinol + NAD(+) + 4 H(+)(out). Its function is as follows. Core subunit of the mitochondrial membrane respiratory chain NADH dehydrogenase (Complex I) which catalyzes electron transfer from NADH through the respiratory chain, using ubiquinone as an electron acceptor. Essential for the catalytic activity and assembly of complex I. In Ceratotherium simum (White rhinoceros), this protein is NADH-ubiquinone oxidoreductase chain 6 (MT-ND6).